Consider the following 97-residue polypeptide: Sec-independent protein translocase protein TatA (97 aa).

Residues 1 to 21 (MGFNIWSLLIILLIVALLFGT) form a helical membrane-spanning segment. The disordered stretch occupies residues 28–97 (GGDLGGAIRG…SAEHHDRSTS (70 aa)). Over residues 37–56 (GFKESMREGEEEEAQKRADG) the composition is skewed to basic and acidic residues. Residues 78-87 (QARESSSARQ) show a composition bias toward low complexity. The segment covering 88 to 97 (SAEHHDRSTS) has biased composition (basic and acidic residues).

This sequence belongs to the TatA/E family. In terms of assembly, the Tat system comprises two distinct complexes: a TatABC complex, containing multiple copies of TatA, TatB and TatC subunits, and a separate TatA complex, containing only TatA subunits. Substrates initially bind to the TatABC complex, which probably triggers association of the separate TatA complex to form the active translocon.

It is found in the cell inner membrane. Its function is as follows. Part of the twin-arginine translocation (Tat) system that transports large folded proteins containing a characteristic twin-arginine motif in their signal peptide across membranes. TatA could form the protein-conducting channel of the Tat system. This chain is Sec-independent protein translocase protein TatA, found in Halorhodospira halophila (strain DSM 244 / SL1) (Ectothiorhodospira halophila (strain DSM 244 / SL1)).